A 243-amino-acid polypeptide reads, in one-letter code: Uridylate kinase (243 aa).

Position 18–21 (18–21 (KLGG)) interacts with ATP. UMP is bound at residue glycine 59. The ATP site is built by glycine 60 and arginine 64. Residues aspartate 79 and 140-147 (MGMPYFST) each bind UMP. ATP-binding residues include tyrosine 173 and aspartate 176.

It belongs to the UMP kinase family. Homohexamer.

The protein resides in the cytoplasm. It catalyses the reaction UMP + ATP = UDP + ADP. Its pathway is pyrimidine metabolism; CTP biosynthesis via de novo pathway; UDP from UMP (UMPK route): step 1/1. Its activity is regulated as follows. Inhibited by UTP. Catalyzes the reversible phosphorylation of UMP to UDP. This is Uridylate kinase from Corynebacterium efficiens (strain DSM 44549 / YS-314 / AJ 12310 / JCM 11189 / NBRC 100395).